The chain runs to 131 residues: Global transcriptional regulator Spx 2 (131 aa).

An intrachain disulfide couples Cys10 to Cys13.

The protein belongs to the ArsC family. Spx subfamily. As to quaternary structure, interacts with the C-terminal domain of the alpha subunit of the RNAP.

It localises to the cytoplasm. Global transcriptional regulator that plays a key role in stress response and exerts either positive or negative regulation of genes. Acts by interacting with the C-terminal domain of the alpha subunit of the RNA polymerase (RNAP). This interaction can enhance binding of RNAP to the promoter region of target genes and stimulate their transcription, or block interaction of RNAP with activator. The polypeptide is Global transcriptional regulator Spx 2 (Bacillus cereus (strain ATCC 14579 / DSM 31 / CCUG 7414 / JCM 2152 / NBRC 15305 / NCIMB 9373 / NCTC 2599 / NRRL B-3711)).